Reading from the N-terminus, the 373-residue chain is Alanine racemase (373 aa).

Catalysis depends on Lys-37, which acts as the Proton acceptor; specific for D-alanine. The residue at position 37 (Lys-37) is an N6-(pyridoxal phosphate)lysine. Residue Arg-135 coordinates substrate. Tyr-266 functions as the Proton acceptor; specific for L-alanine in the catalytic mechanism. Met-313 contacts substrate.

It belongs to the alanine racemase family. Pyridoxal 5'-phosphate serves as cofactor.

The catalysed reaction is L-alanine = D-alanine. It participates in amino-acid biosynthesis; D-alanine biosynthesis; D-alanine from L-alanine: step 1/1. Functionally, catalyzes the interconversion of L-alanine and D-alanine. This organism is able to use both L- and D-alanine as a nitrogen source. May also prevent D-alanine from interfering with the use of L-alanine. The sequence is that of Alanine racemase (alr) from Methanococcus maripaludis (strain DSM 14266 / JCM 13030 / NBRC 101832 / S2 / LL).